The chain runs to 1374 residues: DNA-directed RNA polymerase subunit beta (1374 aa).

Belongs to the RNA polymerase beta chain family. As to quaternary structure, the RNAP catalytic core consists of 2 alpha, 1 beta, 1 beta' and 1 omega subunit. When a sigma factor is associated with the core the holoenzyme is formed, which can initiate transcription.

The enzyme catalyses RNA(n) + a ribonucleoside 5'-triphosphate = RNA(n+1) + diphosphate. In terms of biological role, DNA-dependent RNA polymerase catalyzes the transcription of DNA into RNA using the four ribonucleoside triphosphates as substrates. The polypeptide is DNA-directed RNA polymerase subunit beta (Methylobacterium nodulans (strain LMG 21967 / CNCM I-2342 / ORS 2060)).